A 331-amino-acid polypeptide reads, in one-letter code: Outer membrane lipoprotein PM1514 (331 aa).

A signal peptide spans 1-20 (MQYFDIKKSLPVFCSLLITA). A lipid anchor (N-palmitoyl cysteine) is attached at cysteine 21. Cysteine 21 is lipidated: S-diacylglycerol cysteine.

It localises to the cell outer membrane. Its subcellular location is the cell surface. The chain is Outer membrane lipoprotein PM1514 from Pasteurella multocida (strain Pm70).